A 549-amino-acid chain; its full sequence is Glucose-6-phosphate isomerase (549 aa).

An N6-acetyllysine mark is found at K80, K228, and K234. E355 functions as the Proton donor in the catalytic mechanism. Residues H386 and K514 contribute to the active site.

It belongs to the GPI family.

Its subcellular location is the cytoplasm. It carries out the reaction alpha-D-glucose 6-phosphate = beta-D-fructose 6-phosphate. It participates in carbohydrate biosynthesis; gluconeogenesis. It functions in the pathway carbohydrate degradation; glycolysis; D-glyceraldehyde 3-phosphate and glycerone phosphate from D-glucose: step 2/4. Functionally, catalyzes the reversible isomerization of glucose-6-phosphate to fructose-6-phosphate. In Escherichia coli O139:H28 (strain E24377A / ETEC), this protein is Glucose-6-phosphate isomerase.